Reading from the N-terminus, the 159-residue chain is 2-C-methyl-D-erythritol 2,4-cyclodiphosphate synthase (159 aa).

A divalent metal cation is bound by residues Asp8 and His10. 4-CDP-2-C-methyl-D-erythritol 2-phosphate-binding positions include 8–10 and 34–35; these read DVH and HS. His42 lines the a divalent metal cation pocket. 4-CDP-2-C-methyl-D-erythritol 2-phosphate-binding positions include 56–58, 61–65, 132–135, Phe139, and Arg142; these read DIG, FPDTD, and TTTE.

This sequence belongs to the IspF family. Homotrimer. Requires a divalent metal cation as cofactor.

The catalysed reaction is 4-CDP-2-C-methyl-D-erythritol 2-phosphate = 2-C-methyl-D-erythritol 2,4-cyclic diphosphate + CMP. It participates in isoprenoid biosynthesis; isopentenyl diphosphate biosynthesis via DXP pathway; isopentenyl diphosphate from 1-deoxy-D-xylulose 5-phosphate: step 4/6. Involved in the biosynthesis of isopentenyl diphosphate (IPP) and dimethylallyl diphosphate (DMAPP), two major building blocks of isoprenoid compounds. Catalyzes the conversion of 4-diphosphocytidyl-2-C-methyl-D-erythritol 2-phosphate (CDP-ME2P) to 2-C-methyl-D-erythritol 2,4-cyclodiphosphate (ME-CPP) with a corresponding release of cytidine 5-monophosphate (CMP). This Syntrophobacter fumaroxidans (strain DSM 10017 / MPOB) protein is 2-C-methyl-D-erythritol 2,4-cyclodiphosphate synthase.